The following is a 246-amino-acid chain: NH(3)-dependent NAD(+) synthetase (246 aa).

29–36 (GLSGGIDS) provides a ligand contact to ATP. Asp-35 serves as a coordination point for Mg(2+). Residue Arg-110 coordinates deamido-NAD(+). Thr-130 contributes to the ATP binding site. Glu-135 lines the Mg(2+) pocket. The ATP site is built by Lys-159 and Ser-181.

It belongs to the NAD synthetase family. Homodimer.

The catalysed reaction is deamido-NAD(+) + NH4(+) + ATP = AMP + diphosphate + NAD(+) + H(+). It functions in the pathway cofactor biosynthesis; NAD(+) biosynthesis; NAD(+) from deamido-NAD(+) (ammonia route): step 1/1. In terms of biological role, catalyzes the ATP-dependent amidation of deamido-NAD to form NAD. Uses ammonia as a nitrogen source. The polypeptide is NH(3)-dependent NAD(+) synthetase (Campylobacter jejuni subsp. jejuni serotype O:23/36 (strain 81-176)).